The chain runs to 1091 residues: ATP-dependent RNA helicase ddx54 (1091 aa).

Disordered stretches follow at residues 1 to 63 (MVKP…KEEF) and 150 to 231 (DNSN…KTGG). Positions 26–35 (MKGKKLETKS) are enriched in basic and acidic residues. Over residues 150-161 (DNSNFDNNGDQF) the composition is skewed to polar residues. A compositionally biased stretch (basic and acidic residues) spans 196-207 (KKEEIESSEKFE). A Q motif motif is present at residues 230 to 258 (GGFQSMDLTKNLLKAILKKGFNVPTPIQR). In terms of domain architecture, Helicase ATP-binding spans 261-433 (IPMILDGHDI…RAGLNNPKLI (173 aa)). 274–281 (ARTGSGKT) lines the ATP pocket. The DEAD box motif lies at 381–384 (DEAD). One can recognise a Helicase C-terminal domain in the interval 478–632 (TETTTTTTTN…KFQYEGQTIN (155 aa)). 2 disordered regions span residues 801–896 (EEML…TPEN) and 933–1091 (KRKG…KSRK). The span at 814-823 (DNNKDIKMNE) shows a compositional bias: basic and acidic residues. Over residues 824 to 855 (NDDENDDDDEEGENDDDEEEENEKDEDDEEDE) the composition is skewed to acidic residues. Composition is skewed to basic and acidic residues over residues 865 to 874 (ESSDKNDNNK), 944 to 975 (DADRKNSKKLVRNEAGKLVEAKKSHKGYEEWK), and 1008 to 1019 (QGREKEKKDNKA). The span at 1020 to 1029 (SHAKGSHGLK) shows a compositional bias: basic residues. Residues 1031–1052 (RPSELKDKNQISKNRSEKERKM) are compositionally biased toward basic and acidic residues. Gly residues predominate over residues 1068 to 1079 (SGGGGGGKGSKF).

Belongs to the DEAD box helicase family. DDX54/DBP10 subfamily.

It is found in the nucleus. The protein resides in the nucleolus. It catalyses the reaction ATP + H2O = ADP + phosphate + H(+). ATP-binding RNA helicase which may be involved in the ribosome biogenesis. The sequence is that of ATP-dependent RNA helicase ddx54 (helA) from Dictyostelium discoideum (Social amoeba).